The primary structure comprises 221 residues: ATP phosphoribosyltransferase (221 aa).

The protein belongs to the ATP phosphoribosyltransferase family. Short subfamily. In terms of assembly, heteromultimer composed of HisG and HisZ subunits.

Its subcellular location is the cytoplasm. The catalysed reaction is 1-(5-phospho-beta-D-ribosyl)-ATP + diphosphate = 5-phospho-alpha-D-ribose 1-diphosphate + ATP. It participates in amino-acid biosynthesis; L-histidine biosynthesis; L-histidine from 5-phospho-alpha-D-ribose 1-diphosphate: step 1/9. In terms of biological role, catalyzes the condensation of ATP and 5-phosphoribose 1-diphosphate to form N'-(5'-phosphoribosyl)-ATP (PR-ATP). Has a crucial role in the pathway because the rate of histidine biosynthesis seems to be controlled primarily by regulation of HisG enzymatic activity. The sequence is that of ATP phosphoribosyltransferase from Neisseria gonorrhoeae (strain ATCC 700825 / FA 1090).